The primary structure comprises 373 residues: Chaperone protein DnaJ (373 aa).

A J domain is found at 5–70 (DYYEVLGVAK…QKRAAYDRYG (66 aa)). The CR-type zinc finger occupies 133 to 211 (GFDTEIRVPS…CDGVGRTRRN (79 aa)). Zn(2+) is bound by residues Cys146, Cys149, Cys163, Cys166, Cys185, Cys188, Cys199, and Cys202. CXXCXGXG motif repeat units follow at residues 146–153 (CDTCHGSG), 163–170 (CRTCGGSG), 185–192 (CPTCHGTG), and 199–206 (CPSCDGVG).

It belongs to the DnaJ family. In terms of assembly, homodimer. Zn(2+) is required as a cofactor.

It is found in the cytoplasm. Functionally, participates actively in the response to hyperosmotic and heat shock by preventing the aggregation of stress-denatured proteins and by disaggregating proteins, also in an autonomous, DnaK-independent fashion. Unfolded proteins bind initially to DnaJ; upon interaction with the DnaJ-bound protein, DnaK hydrolyzes its bound ATP, resulting in the formation of a stable complex. GrpE releases ADP from DnaK; ATP binding to DnaK triggers the release of the substrate protein, thus completing the reaction cycle. Several rounds of ATP-dependent interactions between DnaJ, DnaK and GrpE are required for fully efficient folding. Also involved, together with DnaK and GrpE, in the DNA replication of plasmids through activation of initiation proteins. This Bordetella bronchiseptica (strain ATCC BAA-588 / NCTC 13252 / RB50) (Alcaligenes bronchisepticus) protein is Chaperone protein DnaJ.